Reading from the N-terminus, the 880-residue chain is Chaperone protein ClpB 1 (880 aa).

The 143-residue stretch at 6-148 (PNKFTDKAWE…EASIKAVRGS (143 aa)) folds into the Clp R domain. Repeat stretches follow at residues 9–74 (FTDK…TQRQ) and 85–148 (LGRS…VRGS). Residues 161-343 (EALQKFGRDL…RRFQQVYVDQ (183 aa)) form an NBD1 region. ATP is bound at residue 208–215 (GEPGVGKT). Residues 344-554 (PSVENTISIL…IAEIVAKWTG (211 aa)) are linker. Positions 394–530 (IDLVDEAAAQ…KEAKLLELQS (137 aa)) form a coiled coil. Residues 564-775 (ERQKLLQLES…RVDDTILFHA (212 aa)) form an NBD2 region. 614 to 621 (GPTGVGKT) contributes to the ATP binding site. A C-terminal region spans residues 776–880 (LSRSEMSHII…VKVSVTQITT (105 aa)).

Belongs to the ClpA/ClpB family. In terms of assembly, homohexamer. The oligomerization is ATP-dependent.

It localises to the cytoplasm. Functionally, part of a stress-induced multi-chaperone system, it is involved in the recovery of the cell from heat-induced damage, in cooperation with DnaK, DnaJ and GrpE. Acts before DnaK, in the processing of protein aggregates. Protein binding stimulates the ATPase activity; ATP hydrolysis unfolds the denatured protein aggregates, which probably helps expose new hydrophobic binding sites on the surface of ClpB-bound aggregates, contributing to the solubilization and refolding of denatured protein aggregates by DnaK. In Nostoc sp. (strain PCC 7120 / SAG 25.82 / UTEX 2576), this protein is Chaperone protein ClpB 1 (clpB1).